The sequence spans 134 residues: Small ribosomal subunit protein bS16 (134 aa).

A disordered region spans residues 115–134; the sequence is AKLRRRQAKKAAEAAGSAEG.

This sequence belongs to the bacterial ribosomal protein bS16 family.

The protein is Small ribosomal subunit protein bS16 of Chlorobaculum tepidum (strain ATCC 49652 / DSM 12025 / NBRC 103806 / TLS) (Chlorobium tepidum).